Consider the following 506-residue polypeptide: Alpha-ketoglutarate-dependent dioxygenase FTO (506 aa).

Position 4 is a phosphothreonine (Thr4). Residues 32-326 (TPKDDEFYQQ…SSTHRVAECS (295 aa)) are fe2OG dioxygenase domain. Residues Arg96 and Tyr108 each contribute to the substrate site. Asn204 contacts 2-oxoglutarate. The interval 212-223 (PYLKEEPYFGMG) is loop L1; predicted to block binding of double-stranded DNA or RNA. The residue at position 215 (Lys215) is an N6-acetyllysine. The Fe cation site is built by His230 and Asp232. 230 to 233 (HHDE) serves as a coordination point for substrate. Tyr294 provides a ligand contact to 2-oxoglutarate. His306 contacts Fe cation. Residues 315–317 (RFS), Thr319, and Arg321 contribute to the 2-oxoglutarate site.

Belongs to the fto family. As to quaternary structure, monomer. May also exist as homodimer. Fe(2+) is required as a cofactor.

Its subcellular location is the nucleus. The protein localises to the nucleus speckle. It localises to the cytoplasm. It carries out the reaction a 5'-end (N(7)-methyl 5'-triphosphoguanosine)-(N(6),2'-O-dimethyladenosine) in mRNA + 2-oxoglutarate + O2 = a 5'-end (N(7)-methyl 5'-triphosphoguanosine)-(2'-O-methyladenosine) in mRNA + formaldehyde + succinate + CO2. The catalysed reaction is an N(6)-methyladenosine in mRNA + 2-oxoglutarate + O2 = an adenosine in mRNA + formaldehyde + succinate + CO2. It catalyses the reaction N(6)-methyladenosine in U6 snRNA + 2-oxoglutarate + O2 = adenosine in U6 snRNA + formaldehyde + succinate + CO2. The enzyme catalyses a 5'-end (N(7)-methyl 5'-triphosphoguanosine)-(N(6),2'-O-dimethyladenosine) in U6 snRNA + 2-oxoglutarate + O2 = a 5'-end (N(7)-methyl 5'-triphosphoguanosine)-(2'-O-methyladenosine) in U6 snRNA + formaldehyde + succinate + CO2. It carries out the reaction an N(1)-methyladenosine in tRNA + 2-oxoglutarate + O2 = an adenosine in tRNA + formaldehyde + succinate + CO2. Its function is as follows. RNA demethylase that mediates oxidative demethylation of different RNA species, such as mRNAs, tRNAs and snRNAs, and acts as a regulator of fat mass, adipogenesis and energy homeostasis. Specifically demethylates N(6)-methyladenosine (m6A) RNA, the most prevalent internal modification of messenger RNA (mRNA) in higher eukaryotes. M6A demethylation by FTO affects mRNA expression and stability. Also able to demethylate m6A in U6 small nuclear RNA (snRNA). Mediates demethylation of N(6),2'-O-dimethyladenosine cap (m6A(m)), by demethylating the N(6)-methyladenosine at the second transcribed position of mRNAs and U6 snRNA. Demethylation of m6A(m) in the 5'-cap by FTO affects mRNA stability by promoting susceptibility to decapping. Also acts as a tRNA demethylase by removing N(1)-methyladenine from various tRNAs. Has no activity towards 1-methylguanine. Has no detectable activity towards double-stranded DNA. Also able to repair alkylated DNA and RNA by oxidative demethylation: demethylates single-stranded RNA containing 3-methyluracil, single-stranded DNA containing 3-methylthymine and has low demethylase activity towards single-stranded DNA containing 1-methyladenine or 3-methylcytosine. Ability to repair alkylated DNA and RNA is however unsure in vivo. Involved in the regulation of fat mass, adipogenesis and body weight, thereby contributing to the regulation of body size and body fat accumulation. Involved in the regulation of thermogenesis and the control of adipocyte differentiation into brown or white fat cells. Regulates activity of the dopaminergic midbrain circuitry via its ability to demethylate m6A in mRNAs. Plays an oncogenic role in a number of acute myeloid leukemias by enhancing leukemic oncogene-mediated cell transformation: acts by mediating m6A demethylation of target transcripts such as MYC, CEBPA, ASB2 and RARA, leading to promote their expression. The chain is Alpha-ketoglutarate-dependent dioxygenase FTO (FTO) from Canis lupus familiaris (Dog).